The sequence spans 66 residues: SGKGKGDLCTAACKNEPCQCGSKCQCGEGCACASCKTCNCTSDGCKCGKECTGAASCKCNSSCSCK.

An N-acetylserine modification is found at Ser-1. 18 residues coordinate Cd(2+): Cys-9, Cys-13, Cys-18, Cys-20, Cys-24, Cys-26, Cys-30, Cys-32, Cys-35, Cys-38, Cys-40, Cys-45, Cys-47, Cys-51, Cys-57, Cys-59, Cys-63, and Cys-65.

It belongs to the metallothionein superfamily. Type 2 family.

Its function is as follows. The metallothioneins are involved in the cellular sequestration of toxic metal ions and regulation of essential trace elements. The polypeptide is Metallothionein (Arianta arbustorum (Land snail)).